The primary structure comprises 341 residues: Tetraacyldisaccharide 4'-kinase (341 aa).

Residue 57 to 64 (TVGGTGKT) coordinates ATP.

The protein belongs to the LpxK family.

It catalyses the reaction a lipid A disaccharide + ATP = a lipid IVA + ADP + H(+). It functions in the pathway glycolipid biosynthesis; lipid IV(A) biosynthesis; lipid IV(A) from (3R)-3-hydroxytetradecanoyl-[acyl-carrier-protein] and UDP-N-acetyl-alpha-D-glucosamine: step 6/6. Its function is as follows. Transfers the gamma-phosphate of ATP to the 4'-position of a tetraacyldisaccharide 1-phosphate intermediate (termed DS-1-P) to form tetraacyldisaccharide 1,4'-bis-phosphate (lipid IVA). The sequence is that of Tetraacyldisaccharide 4'-kinase from Maricaulis maris (strain MCS10) (Caulobacter maris).